A 663-amino-acid polypeptide reads, in one-letter code: Polyunsaturated fatty acid lipoxygenase ALOX15 (663 aa).

The PLAT domain maps to 2–115 (GLYRVRVSTG…ILSLPEGTGR (114 aa)). One can recognise a Lipoxygenase domain in the interval 116 to 663 (TVVDDPQGLF…PSLVENSVAI (548 aa)). Fe cation is bound by residues H361, H366, H541, H545, and I663.

The protein belongs to the lipoxygenase family. Interacts with PEBP1; in response to IL13/interleukin-13, prevents the interaction of PEBP1 with RAF1 to activate the ERK signaling cascade. Fe cation is required as a cofactor. In terms of tissue distribution, detected in tracheal epithelium.

It is found in the cytoplasm. Its subcellular location is the cytosol. The protein resides in the cell membrane. The protein localises to the lipid droplet. The catalysed reaction is (5Z,8Z,11Z,14Z)-eicosatetraenoate + O2 = (12S)-hydroperoxy-(5Z,8Z,10E,14Z)-eicosatetraenoate. It carries out the reaction (5Z,8Z,11Z,14Z)-eicosatetraenoate + O2 = (15S)-hydroperoxy-(5Z,8Z,11Z,13E)-eicosatetraenoate. The enzyme catalyses (9Z,12Z)-octadecadienoate + O2 = (13S)-hydroperoxy-(9Z,11E)-octadecadienoate. It catalyses the reaction (5Z,8Z,11Z,14Z)-eicosatetraenoate + 2 O2 = (14R,15S)-dihydroperoxy-(5Z,8Z,10E,12E)-eicosatetraenoate. The catalysed reaction is (5Z,8Z,11Z,14Z)-eicosatetraenoate + 2 O2 = (8S,15S)-dihydroperoxy-(5Z,9E,11Z,13E)-eicosatetraenoate. It carries out the reaction (14S,15R)-epoxy-(5Z,8Z,11Z)-eicosatrienoate + O2 = (8S)-hydroperoxy-(14S,15R)-epoxy-(5Z,9E,11Z)-eicosatrienoate. The enzyme catalyses (14S,15R)-epoxy-(5Z,8Z,11Z)-eicosatrienoate + O2 = (12S)-hydroperoxy-(14S,15R)-epoxy-(5Z,8Z,10E)-eicosatrienoate. It catalyses the reaction (14R,15S)-epoxy-(5Z,8Z,11Z)-eicosatrienoate + O2 = (5S)-hydroperoxy-(14R,15S)-epoxy-(6E,8Z,11Z)-eicosatrienoate. The catalysed reaction is (14R,15S)-epoxy-(5Z,8Z,11Z)-eicosatrienoate + O2 = (12S)-hydroperoxy-(14R,15S)-epoxy-(5Z,8Z,10E)-eicosatrienoate. It carries out the reaction (15R)-hydroperoxy-(5Z,8Z,11Z,13E)-eicosatetraenoate = 15-oxo-(5Z,8Z,11Z,13E)-eicosatetraenoate + H2O. The enzyme catalyses (15S)-hydroperoxy-(5Z,8Z,11Z,13E)-eicosatetraenoate = (14S,15S)-epoxy-(5Z,8Z,10E,12E)-eicosatetraenoate + H2O. It catalyses the reaction (12S)-hydroperoxy-(5Z,8Z,10E,14Z)-eicosatetraenoate = (8S)-hydroxy-(11S,12S)-epoxy-(5Z,9E,14Z)-eicosatrienoate. The catalysed reaction is (4Z,7Z,10Z,13Z,16Z)-docosapentaenoate + O2 = 14-hydroperoxy-(4Z,7Z,10Z,12E,16Z)-docosapentaenoate. It carries out the reaction (7Z,10Z,13Z,16Z,19Z)-docosapentaenoate + O2 = 14-hydroperoxy-(7Z,10Z,12E,16Z,19Z)-docosapentaenoate. The enzyme catalyses (4Z,7Z,10Z,13Z,16Z,19Z)-docosahexaenoate + O2 = (14S)-hydroperoxy-(4Z,7Z,10Z,12E,16Z,19Z)-docosahexaenoate. It catalyses the reaction (4Z,7Z,10Z,13Z,16Z,19Z)-docosahexaenoate + O2 = (17S)-hydroperoxy-(4Z,7Z,10Z,13Z,15E,19Z)-docosahexaenoate. The catalysed reaction is (7S)-hydroperoxy-(4Z,8E,10Z,13Z,16Z,19Z)-docosahexaenoate + O2 = (7S,14S)-dihydroperoxy-(4Z,8E,10Z,12E,16Z,19Z)-docosahexaenoate. It carries out the reaction (7S)-hydroperoxy-(4Z,8E,10Z,13Z,16Z,19Z)-docosahexaenoate + O2 = (7S,17S)-dihydroperoxy-(4Z,8E,10Z,13Z,15E,19Z)-docosahexaenoate. The enzyme catalyses (4Z,7Z,10Z,13Z,16Z,19Z)-docosahexaenoate + O2 = (11S)-hydroperoxy-(4Z,7Z,9E,13Z,16Z,19Z)-docosahexaenoate. It catalyses the reaction N-(5Z,8Z,11Z,14Z)-eicosatetraenoyl-taurine + O2 = N-(12S)-hydroperoxy-(5Z,8Z,10E,14Z)-eicosatetraenoyl-taurine. The catalysed reaction is N-(5Z,8Z,11Z,14Z)-eicosatetraenoyl-gamma-aminobutanoate + O2 = N-(12S)-hydroperoxy-(5Z,8Z,10E,14Z)-eicosatetraenoyl-gamma-aminobutanoate. It carries out the reaction N-(5Z,8Z,11Z,14Z)-eicosatetraenoyl-glycine + O2 = N-(12S)-hydroperoxy-(5Z,8Z,10E,14Z)-eicosatetraenoyl-glycine. The enzyme catalyses N-(5Z,8Z,11Z,14Z)-eicosatetraenoyl-L-alanine + O2 = N-(12S)-hydroperoxy-(5Z,8Z,10E,14Z)-eicosatetraenoyl-alanine. It catalyses the reaction N-(5Z,8Z,11Z,14Z)-eicosatetraenoyl-taurine + O2 = N-(15S)-hydroperoxy-(5Z,8Z,11Z,13E)-eicosatetraenoyl-taurine. The catalysed reaction is N-(5Z,8Z,11Z,14Z)-eicosatetraenoyl-gamma-aminobutanoate + O2 = N-(15S)-hydroperoxy-(5Z,8Z,11Z,13E)-eicosatetraenoyl-gamma-aminobutanoate. It carries out the reaction N-(5Z,8Z,11Z,14Z)-eicosatetraenoyl-glycine + O2 = N-(15S)-hydroperoxy-(5Z,8Z,11Z,13E)-eicosatetraenoyl-glycine. The enzyme catalyses N-(5Z,8Z,11Z,14Z)-eicosatetraenoyl-L-alanine + O2 = N-(15S)-hydroperoxy-(5Z,8Z,11Z,13E)-eicosatetraenoyl-alanine. It functions in the pathway lipid metabolism; hydroperoxy eicosatetraenoic acid biosynthesis. In terms of biological role, non-heme iron-containing dioxygenase that catalyzes the stereo-specific peroxidation of free and esterified polyunsaturated fatty acids generating a spectrum of bioactive lipid mediators. It inserts peroxyl groups at C12 or C15 of arachidonate ((5Z,8Z,11Z,14Z)-eicosatetraenoate) producing both 12-hydroperoxyeicosatetraenoate/12-HPETE and 15-hydroperoxyeicosatetraenoate/15-HPETE. It may then act on 12-HPETE to produce hepoxilins, which may show pro-inflammatory properties. Can also peroxidize linoleate ((9Z,12Z)-octadecadienoate) to 13-hydroperoxyoctadecadienoate. May participate in the sequential oxidations of DHA ((4Z,7Z,10Z,13Z,16Z,19Z)-docosahexaenoate) to generate specialized pro-resolving mediators (SPMs)like resolvin D5 ((7S,17S)-diHPDHA) and (7S,14S)-diHPDHA, that actively down-regulate the immune response and have anti-aggregation properties with platelets. Can convert epoxy fatty acids to hydroperoxy-epoxides derivatives followed by an intramolecular nucleophilic substitution leading to the formation of monocyclic endoperoxides. Plays an important role during the maintenance of self-tolerance by peroxidizing membrane-bound phosphatidylethanolamine which can then signal the sorting process for clearance of apoptotic cells during inflammation and prevent an autoimmune response. In addition to its role in the immune and inflammatory responses, this enzyme may play a role in epithelial wound healing in the cornea through production of lipoxin A4 (LXA(4)) and docosahexaenoic acid-derived neuroprotectin D1 (NPD1; 10R,17S-HDHA), both lipid autacoids exhibit anti-inflammatory and neuroprotective properties. Furthermore, it may regulate actin polymerization which is crucial for several biological processes such as the phagocytosis of apoptotic cells. It is also implicated in the generation of endogenous ligands for peroxisome proliferator activated receptor (PPAR-gamma), hence modulating macrophage development and function. It may also exert a negative effect on skeletal development by regulating bone mass through this pathway. As well as participates in ER stress and downstream inflammation in adipocytes, pancreatic islets, and liver. Finally, it is also involved in the cellular response to IL13/interleukin-13. The protein is Polyunsaturated fatty acid lipoxygenase ALOX15 of Bos taurus (Bovine).